A 344-amino-acid polypeptide reads, in one-letter code: Probable dual-specificity RNA methyltransferase RlmN (344 aa).

Glu-92 (proton acceptor) is an active-site residue. Residues 98–325 (DEDRATLCVS…TTIRASRGED (228 aa)) form the Radical SAM core domain. Residues Cys-105 and Cys-330 are joined by a disulfide bond. Cys-112, Cys-116, and Cys-119 together coordinate [4Fe-4S] cluster. S-adenosyl-L-methionine-binding positions include 157-158 (GE), Ser-189, 211-213 (SLH), and His-287. Cys-330 acts as the S-methylcysteine intermediate in catalysis.

Belongs to the radical SAM superfamily. RlmN family. It depends on [4Fe-4S] cluster as a cofactor.

It localises to the cytoplasm. The enzyme catalyses adenosine(2503) in 23S rRNA + 2 reduced [2Fe-2S]-[ferredoxin] + 2 S-adenosyl-L-methionine = 2-methyladenosine(2503) in 23S rRNA + 5'-deoxyadenosine + L-methionine + 2 oxidized [2Fe-2S]-[ferredoxin] + S-adenosyl-L-homocysteine. It catalyses the reaction adenosine(37) in tRNA + 2 reduced [2Fe-2S]-[ferredoxin] + 2 S-adenosyl-L-methionine = 2-methyladenosine(37) in tRNA + 5'-deoxyadenosine + L-methionine + 2 oxidized [2Fe-2S]-[ferredoxin] + S-adenosyl-L-homocysteine. Specifically methylates position 2 of adenine 2503 in 23S rRNA and position 2 of adenine 37 in tRNAs. In Bacteroides fragilis (strain ATCC 25285 / DSM 2151 / CCUG 4856 / JCM 11019 / LMG 10263 / NCTC 9343 / Onslow / VPI 2553 / EN-2), this protein is Probable dual-specificity RNA methyltransferase RlmN.